The primary structure comprises 247 residues: 3-deoxy-manno-octulosonate cytidylyltransferase (247 aa).

This sequence belongs to the KdsB family.

The protein localises to the cytoplasm. It catalyses the reaction 3-deoxy-alpha-D-manno-oct-2-ulosonate + CTP = CMP-3-deoxy-beta-D-manno-octulosonate + diphosphate. The protein operates within nucleotide-sugar biosynthesis; CMP-3-deoxy-D-manno-octulosonate biosynthesis; CMP-3-deoxy-D-manno-octulosonate from 3-deoxy-D-manno-octulosonate and CTP: step 1/1. It participates in bacterial outer membrane biogenesis; lipopolysaccharide biosynthesis. Activates KDO (a required 8-carbon sugar) for incorporation into bacterial lipopolysaccharide in Gram-negative bacteria. The sequence is that of 3-deoxy-manno-octulosonate cytidylyltransferase from Rhodopseudomonas palustris (strain BisA53).